We begin with the raw amino-acid sequence, 123 residues long: Small ribosomal subunit protein uS12cz/uS12cy (123 aa).

Belongs to the universal ribosomal protein uS12 family. As to quaternary structure, part of the 30S ribosomal subunit.

The protein localises to the plastid. It is found in the chloroplast. Functionally, with S4 and S5 plays an important role in translational accuracy. Located at the interface of the 30S and 50S subunits. The protein is Small ribosomal subunit protein uS12cz/uS12cy (rps12-A) of Eucalyptus globulus subsp. globulus (Tasmanian blue gum).